Reading from the N-terminus, the 104-residue chain is uncharacterized protein (104 aa).

The signal sequence occupies residues 1–18; sequence MGVEGMWNVFLFSLQVAA. N-linked (GlcNAc...) asparagine; by host glycosylation is present at asparagine 27.

This is an uncharacterized protein from Fowl adenovirus A serotype 1 (strain CELO / Phelps) (FAdV-1).